Consider the following 435-residue polypeptide: UDP-N-acetylmuramate--L-alanine ligase (435 aa).

ATP is bound at residue 108-114 (GAHGKST).

This sequence belongs to the MurCDEF family.

The protein resides in the cytoplasm. The catalysed reaction is UDP-N-acetyl-alpha-D-muramate + L-alanine + ATP = UDP-N-acetyl-alpha-D-muramoyl-L-alanine + ADP + phosphate + H(+). The protein operates within cell wall biogenesis; peptidoglycan biosynthesis. In terms of biological role, cell wall formation. The chain is UDP-N-acetylmuramate--L-alanine ligase from Campylobacter curvus (strain 525.92).